We begin with the raw amino-acid sequence, 336 residues long: Alcohol dehydrogenase (336 aa).

Residues cysteine 37, histidine 58, cysteine 89, cysteine 92, cysteine 95, cysteine 103, and cysteine 145 each coordinate Zn(2+).

It belongs to the zinc-containing alcohol dehydrogenase family. Zn(2+) is required as a cofactor.

The catalysed reaction is a primary alcohol + NAD(+) = an aldehyde + NADH + H(+). It catalyses the reaction a secondary alcohol + NAD(+) = a ketone + NADH + H(+). This is Alcohol dehydrogenase (adh) from Staphylococcus aureus (strain Mu50 / ATCC 700699).